We begin with the raw amino-acid sequence, 722 residues long: Pre-B-cell leukemia transcription factor-interacting protein 1 (722 aa).

The segment covering 1 to 10 (MASCPDSDNS) has biased composition (polar residues). The tract at residues 1–180 (MASCPDSDNS…TAAVDGEDQA (180 aa)) is disordered. Positions 88 to 97 (DDGHGTKRPG) are enriched in basic and acidic residues. 4 positions are modified to phosphoserine: Ser133, Ser144, Ser145, and Ser146. Thr150 bears the Phosphothreonine mark. Ser166 carries the phosphoserine modification. 2 coiled-coil regions span residues 266–346 (LLLD…RGVD) and 373–401 (DTSL…WQLL). A compositionally biased stretch (polar residues) spans 442-453 (QGINTGRSSNDS). Disordered regions lie at residues 442–562 (QGIN…SPDS) and 691–722 (RRSK…YHQG). 2 stretches are compositionally biased toward basic and acidic residues: residues 465–536 (HPRE…DPKV) and 546–559 (SGER…KDNS). The short motif at 482–502 (QKAEHWKLKKEESGQDRKKSW) is the Nuclear localization signal element. Residue Ser559 is modified to Phosphoserine. A Nuclear localization signal motif is present at residues 686-711 (DKALKRRSKKKEKQPWNHRAVGPREE).

As to quaternary structure, interacts with ESR1, PBX1, PBX2 and PBX3. Interacts with TEX11.

The protein resides in the cytoplasm. Its subcellular location is the cytoskeleton. It localises to the nucleus. Its function is as follows. Regulator of pre-B-cell leukemia transcription factors (BPXs) function. Inhibits the binding of PBX1-HOX complex to DNA and blocks the transcriptional activity of E2A-PBX1. Tethers estrogen receptor-alpha (ESR1) to microtubules and allows them to influence estrogen receptors-alpha signaling. This is Pre-B-cell leukemia transcription factor-interacting protein 1 (Pbxip1) from Rattus norvegicus (Rat).